A 171-amino-acid chain; its full sequence is AAF/I fimbrial subunit (171 aa).

The N-terminal stretch at 1–28 (MKTLKNMRRKNLCITLGLVSLLSRGANA) is a signal peptide.

The protein localises to the fimbrium. This chain is AAF/I fimbrial subunit (aggA), found in Escherichia coli.